The chain runs to 297 residues: Probable GTP 3',8-cyclase (297 aa).

Residues 4–227 (RYGRQIRSFR…MQNRKKYVID (224 aa)) form the Radical SAM core domain. Arg13 contacts GTP. [4Fe-4S] cluster contacts are provided by Cys20 and Cys24. Tyr26 provides a ligand contact to S-adenosyl-L-methionine. Cys27 serves as a coordination point for [4Fe-4S] cluster. Lys61 is a GTP binding site. Residue Gly65 coordinates S-adenosyl-L-methionine. Thr91 is a GTP binding site. S-adenosyl-L-methionine is bound at residue Ser115. Lys152 contacts GTP. [4Fe-4S] cluster contacts are provided by Cys243 and Cys246. Residue 248–250 (RIR) coordinates GTP. Residue Cys260 participates in [4Fe-4S] cluster binding.

It belongs to the radical SAM superfamily. MoaA family. It depends on [4Fe-4S] cluster as a cofactor.

It catalyses the reaction GTP + AH2 + S-adenosyl-L-methionine = (8S)-3',8-cyclo-7,8-dihydroguanosine 5'-triphosphate + 5'-deoxyadenosine + L-methionine + A + H(+). Its pathway is cofactor biosynthesis; molybdopterin biosynthesis. Its function is as follows. Catalyzes the cyclization of GTP to (8S)-3',8-cyclo-7,8-dihydroguanosine 5'-triphosphate. This Methanococcus maripaludis (strain DSM 14266 / JCM 13030 / NBRC 101832 / S2 / LL) protein is Probable GTP 3',8-cyclase.